A 153-amino-acid polypeptide reads, in one-letter code: Lipoprotein signal peptidase (153 aa).

Transmembrane regions (helical) follow at residues 7–27 (LIII…LNNY), 59–79 (NLIR…IFYM), and 93–113 (SIII…GSVI). Active-site residues include Asp114 and Asp132. Residues 123–143 (WHFPVFNFADISIFIGFLILI) traverse the membrane as a helical segment.

The protein belongs to the peptidase A8 family.

The protein localises to the cell membrane. It catalyses the reaction Release of signal peptides from bacterial membrane prolipoproteins. Hydrolyzes -Xaa-Yaa-Zaa-|-(S,diacylglyceryl)Cys-, in which Xaa is hydrophobic (preferably Leu), and Yaa (Ala or Ser) and Zaa (Gly or Ala) have small, neutral side chains.. The protein operates within protein modification; lipoprotein biosynthesis (signal peptide cleavage). This protein specifically catalyzes the removal of signal peptides from prolipoproteins. The polypeptide is Lipoprotein signal peptidase (Wigglesworthia glossinidia brevipalpis).